The following is a 997-amino-acid chain: Synaptonemal complex protein 1 (997 aa).

A Mediates head to head self-assembly of N-terminal ends motif is present at residues 102 to 112 (PMSRLYSKLYK). The Nuclear localization signal motif lies at 118 to 121 (KKWK). Coiled-coil stretches lie at residues 121–176 (KVSI…LIKE) and 212–696 (YVDL…KKIS). Residues 207–363 (ETRQVYVDLN…YQLTEEKEAQ (157 aa)) form an interaction with SYCE3 region. A required for pH-induced assembly of C-terminal ends into antiparallel tetramers region spans residues 698-792 (EKLLGEVEKA…VSLKKQLEVE (95 aa)). The Nuclear localization signal motif lies at 701–704 (LGEV). A coiled-coil region spans residues 768–806 (KVALETELSNIRNELVSLKKQLEVEKEEKEKLKMEQENT). The interval 805–997 (NTAILTDKKD…RLKEAEKLFT (193 aa)) is DNA-binding. The residue at position 824 (Ser-824) is a Phosphoserine. A disordered region spans residues 828–863 (TSWKFDSKTTPSQNISRLSSSMDSGKSKDNRDSLRA). A compositionally biased stretch (polar residues) spans 835 to 851 (KTTPSQNISRLSSSMDS). Residues 852-861 (GKSKDNRDSL) are compositionally biased toward basic and acidic residues. Residues 902-905 (KKRK) carry the Nuclear localization signal motif. At Thr-940 the chain carries Phosphothreonine.

In terms of assembly, structural component of synaptonemal complexes. Homotetramer that consists of an N-terminal four-helical bundle that bifurcates into two elongated C-terminal dimeric coiled coils. This tetrameric building block potentially self-assembles into a supramolecular zipper-like lattice to mediate meiotic chromosome synapsis. Self-assembly is likely initiated by local proton density at chromosome axis, which is predicted to trigger antiparallel back to back assembly of adjacent C-terminal ends into tetrameric structures that anchor to chromosomal DNA. Then the N-terminal ends are predicted to undergo cooperative antiparallel head to head assembly at the midline of synaptonemal complexes central element to form a zipper-like lattice between properly aligned homologous chromosomes. The nascent synapsis generated by SYCP1 is stabilized through interaction with central element proteins SYCE1 and SYCE2. Interacts (via tetrameric core) with SYCE3; the interaction remodels SYCP1 homotetramers to 2:1 heterotrimers with SYCE3. SYCP1/SYCE3 heterotrimers form lattice assemblies as part of the mature synaptonemal complex via both lateral and head-to-head interactions. Forms a complex with EWSR1, PRDM9, SYCP3 and REC8; complex formation is dependent of phosphorylated form of REC8 and requires PRDM9 bound to hotspot DNA; EWSR1 joins PRDM9 with the chromosomal axis through REC8. Interacts with SPO16. In terms of tissue distribution, testis.

The protein resides in the nucleus. It localises to the chromosome. Its subcellular location is the centromere. Major component of the transverse filaments of synaptonemal complexes, formed between homologous chromosomes during meiotic prophase. Required for normal assembly of the central element of the synaptonemal complexes. Required for normal centromere pairing during meiosis. Required for normal meiotic chromosome synapsis during oocyte and spermatocyte development and for normal male and female fertility. The sequence is that of Synaptonemal complex protein 1 from Rattus norvegicus (Rat).